The primary structure comprises 585 residues: Cytoplasmic polyadenylation element-binding protein 1 (585 aa).

Positions 1–32 (MQHQLKACGDVKTSSRAQQNHRRSTAASAKRS) are disordered. RRM domains lie at 251 to 356 (RKVF…PWRL) and 373 to 444 (RTVF…HAET). The interval 513–533 (DQTRILPRPPHHPAAHHSHQR) is disordered. Residues 521-532 (PPHHPAAHHSHQ) are compositionally biased toward basic residues.

As to quaternary structure, interacts with fbf-1.

In terms of biological role, cytoplasmic polyadenylation element binding protein that binds to and regulates the translation of specific mRNAs. Essential for progression through meiosis. Involved in spermatogenesis. In Caenorhabditis briggsae, this protein is Cytoplasmic polyadenylation element-binding protein 1 (cpb-1).